Reading from the N-terminus, the 261-residue chain is Small ribosomal subunit protein uS2 (261 aa).

The protein belongs to the universal ribosomal protein uS2 family.

The protein is Small ribosomal subunit protein uS2 of Thermodesulfovibrio yellowstonii (strain ATCC 51303 / DSM 11347 / YP87).